We begin with the raw amino-acid sequence, 820 residues long: SART-1 family protein DOT2 (820 aa).

Basic and acidic residues-rich tracts occupy residues 1–156 (MEVE…DNRG), 210–219 (EEKRNAEKQR), and 426–445 (LGSR…ERIE). Disordered stretches follow at residues 1 to 177 (MEVE…SALD), 210 to 248 (EEKR…EHLS), 420 to 445 (GLGA…ERIE), 523 to 544 (SSTN…ENTV), 564 to 617 (KPES…PDEN), 657 to 678 (KLVG…SKDR), 729 to 748 (KLKQ…RMRE), and 762 to 820 (GHVK…RPKP). A Phosphoserine modification is found at Ser22. Coiled-coil stretches lie at residues 58–120 (RDKE…EKEK), 171–235 (KEAS…NLNQ), and 433–510 (RRQA…KEEA). Residues 525–543 (TNQTTDDNTTTGDETQENT) are compositionally biased toward low complexity. The segment covering 582–591 (VEVKEEHPDG) has biased composition (basic and acidic residues). Over residues 596-606 (NDTDMDAAEDS) the composition is skewed to acidic residues. Basic and acidic residues-rich tracts occupy residues 607 to 617 (SDTKEITPDEN) and 665 to 678 (DGGK…SKDR). Polar residues-rich tracts occupy residues 733-744 (MKNSDTPSQSVQ) and 767-776 (GQTSDPQSGF). The span at 792 to 807 (GDRKVEHFLGIKRKSE) shows a compositional bias: basic and acidic residues.

This sequence belongs to the SNU66/SART1 family. Expressed in lateral root cap, columella, meristem and quiescent center (QC). Expressed in young leaves.

It localises to the nucleus. Its function is as follows. Plays a role in root, shoot and flower development. Probably required for normal root and shoot meristem organization and maintenance and the proper expression of PIN and PLT genes. Involved in leaf vasculature patterning. The protein is SART-1 family protein DOT2 of Arabidopsis thaliana (Mouse-ear cress).